The sequence spans 410 residues: Protein CNPPD1 (410 aa).

The chain crosses the membrane as a helical span at residues 233 to 253 (CLLAVAYVSSVALAVASVAVI).

Belongs to the CNPPD1 family.

The protein localises to the membrane. The polypeptide is Protein CNPPD1 (CNPPD1) (Homo sapiens (Human)).